Reading from the N-terminus, the 331-residue chain is Putative peptidyl-prolyl cis-trans isomerase RC0542 (331 aa).

The interval 33–54 (EQTASNNSSTDENQTSINNEPP) is disordered. The region spanning 128-226 (GHVVTVFYQI…SNEVKIYDDE (99 aa)) is the PPIase FKBP-type domain.

The catalysed reaction is [protein]-peptidylproline (omega=180) = [protein]-peptidylproline (omega=0). This Rickettsia conorii (strain ATCC VR-613 / Malish 7) protein is Putative peptidyl-prolyl cis-trans isomerase RC0542.